Consider the following 156-residue polypeptide: Dihydrofolate reductase (156 aa).

In terms of domain architecture, DHFR spans 1–156 (MLKLIWCQTL…VNYYSNKKEK (156 aa)).

The protein belongs to the dihydrofolate reductase family.

It carries out the reaction (6S)-5,6,7,8-tetrahydrofolate + NADP(+) = 7,8-dihydrofolate + NADPH + H(+). It functions in the pathway cofactor biosynthesis; tetrahydrofolate biosynthesis; 5,6,7,8-tetrahydrofolate from 7,8-dihydrofolate: step 1/1. Key enzyme in folate metabolism. Catalyzes an essential reaction for de novo glycine and purine synthesis, and for DNA precursor synthesis. The protein is Dihydrofolate reductase (folA) of Ureaplasma parvum serovar 3 (strain ATCC 700970).